A 764-amino-acid chain; its full sequence is 5-methyltetrahydropteroyltriglutamate--homocysteine methyltransferase (764 aa).

Residues R16–K19 and K115 each bind 5-methyltetrahydropteroyltri-L-glutamate. Residues I435–S437 and E488 contribute to the L-homocysteine site. L-methionine-binding positions include I435–S437 and E488. Residues R519 to C520 and W565 contribute to the 5-methyltetrahydropteroyltri-L-glutamate site. L-homocysteine is bound at residue D603. L-methionine is bound at residue D603. Residue E609 participates in 5-methyltetrahydropteroyltri-L-glutamate binding. 3 residues coordinate Zn(2+): H645, C647, and E669. Residue H698 is the Proton donor of the active site. C730 lines the Zn(2+) pocket.

It belongs to the vitamin-B12 independent methionine synthase family. The cofactor is Zn(2+).

The enzyme catalyses 5-methyltetrahydropteroyltri-L-glutamate + L-homocysteine = tetrahydropteroyltri-L-glutamate + L-methionine. It participates in amino-acid biosynthesis; L-methionine biosynthesis via de novo pathway; L-methionine from L-homocysteine (MetE route): step 1/1. In terms of biological role, catalyzes the transfer of a methyl group from 5-methyltetrahydrofolate to homocysteine resulting in methionine formation. The chain is 5-methyltetrahydropteroyltriglutamate--homocysteine methyltransferase from Burkholderia pseudomallei (strain K96243).